The following is a 172-amino-acid chain: Phosphopantetheine adenylyltransferase (172 aa).

Thr-13 serves as a coordination point for substrate. Residues 13–14 (TF) and His-21 each bind ATP. 3 residues coordinate substrate: Lys-45, Leu-81, and Arg-95. ATP-binding positions include 96–98 (GLR), Glu-106, and 131–137 (SQFISSR).

This sequence belongs to the bacterial CoaD family. In terms of assembly, homohexamer. Mg(2+) is required as a cofactor.

The protein resides in the cytoplasm. The enzyme catalyses (R)-4'-phosphopantetheine + ATP + H(+) = 3'-dephospho-CoA + diphosphate. It functions in the pathway cofactor biosynthesis; coenzyme A biosynthesis; CoA from (R)-pantothenate: step 4/5. Its function is as follows. Reversibly transfers an adenylyl group from ATP to 4'-phosphopantetheine, yielding dephospho-CoA (dPCoA) and pyrophosphate. This Rhodospirillum rubrum (strain ATCC 11170 / ATH 1.1.1 / DSM 467 / LMG 4362 / NCIMB 8255 / S1) protein is Phosphopantetheine adenylyltransferase.